Consider the following 261-residue polypeptide: Cytochrome c oxidase subunit 3 (261 aa).

6 helical membrane passes run 31-51, 82-102, 126-146, 159-179, 197-217, and 239-259; these read LVLWFHTGNIILLFTGLLLLI, PMILFITSEVCFFFAFFWAFF, PFLVPLLNTAVLLSSGVTITW, AIQALFLTVVLGIYFTILQAW, FFVATGFHGLHVIIGTTFLLV, and AWYWHFVDVVWLFLYVCIYWW.

Belongs to the cytochrome c oxidase subunit 3 family. As to quaternary structure, component of the cytochrome c oxidase (complex IV, CIV), a multisubunit enzyme composed of a catalytic core of 3 subunits and several supernumerary subunits. The complex exists as a monomer or a dimer and forms supercomplexes (SCs) in the inner mitochondrial membrane with ubiquinol-cytochrome c oxidoreductase (cytochrome b-c1 complex, complex III, CIII).

The protein resides in the mitochondrion inner membrane. The enzyme catalyses 4 Fe(II)-[cytochrome c] + O2 + 8 H(+)(in) = 4 Fe(III)-[cytochrome c] + 2 H2O + 4 H(+)(out). In terms of biological role, component of the cytochrome c oxidase, the last enzyme in the mitochondrial electron transport chain which drives oxidative phosphorylation. The respiratory chain contains 3 multisubunit complexes succinate dehydrogenase (complex II, CII), ubiquinol-cytochrome c oxidoreductase (cytochrome b-c1 complex, complex III, CIII) and cytochrome c oxidase (complex IV, CIV), that cooperate to transfer electrons derived from NADH and succinate to molecular oxygen, creating an electrochemical gradient over the inner membrane that drives transmembrane transport and the ATP synthase. Cytochrome c oxidase is the component of the respiratory chain that catalyzes the reduction of oxygen to water. Electrons originating from reduced cytochrome c in the intermembrane space (IMS) are transferred via the dinuclear copper A center (CU(A)) of subunit 2 and heme A of subunit 1 to the active site in subunit 1, a binuclear center (BNC) formed by heme A3 and copper B (CU(B)). The BNC reduces molecular oxygen to 2 water molecules using 4 electrons from cytochrome c in the IMS and 4 protons from the mitochondrial matrix. The protein is Cytochrome c oxidase subunit 3 (COIII) of Paracentrotus lividus (Common sea urchin).